Reading from the N-terminus, the 962-residue chain is Glycine dehydrogenase (decarboxylating) (962 aa).

Lysine 709 carries the N6-(pyridoxal phosphate)lysine modification.

Belongs to the GcvP family. In terms of assembly, the glycine cleavage system is composed of four proteins: P, T, L and H. Pyridoxal 5'-phosphate is required as a cofactor.

The catalysed reaction is N(6)-[(R)-lipoyl]-L-lysyl-[glycine-cleavage complex H protein] + glycine + H(+) = N(6)-[(R)-S(8)-aminomethyldihydrolipoyl]-L-lysyl-[glycine-cleavage complex H protein] + CO2. Functionally, the glycine cleavage system catalyzes the degradation of glycine. The P protein binds the alpha-amino group of glycine through its pyridoxal phosphate cofactor; CO(2) is released and the remaining methylamine moiety is then transferred to the lipoamide cofactor of the H protein. In Shewanella oneidensis (strain ATCC 700550 / JCM 31522 / CIP 106686 / LMG 19005 / NCIMB 14063 / MR-1), this protein is Glycine dehydrogenase (decarboxylating).